The following is a 230-amino-acid chain: Potassium/proton antiporter CemA (230 aa).

The next 4 membrane-spanning stretches (helical) occupy residues 7–27 (LPSL…SFSF), 106–126 (IILH…FFFL), 145–165 (LNDS…VGFH), and 181–201 (LGWA…PVIL).

It belongs to the CemA family.

It localises to the plastid. The protein resides in the chloroplast inner membrane. The enzyme catalyses K(+)(in) + H(+)(out) = K(+)(out) + H(+)(in). In terms of biological role, contributes to K(+)/H(+) antiport activity by supporting proton efflux to control proton extrusion and homeostasis in chloroplasts in a light-dependent manner to modulate photosynthesis. Prevents excessive induction of non-photochemical quenching (NPQ) under continuous-light conditions. Indirectly promotes efficient inorganic carbon uptake into chloroplasts. The sequence is that of Potassium/proton antiporter CemA from Lolium perenne (Perennial ryegrass).